Here is a 486-residue protein sequence, read N- to C-terminus: Serine/threonine-protein phosphatase 2A 56 kDa regulatory subunit alpha isoform (486 aa).

Position 2 is an N-acetylserine (serine 2). The interval 22–52 (DGFTRKSVRKAQRQKRSQGSSQFRSQGSQAE) is disordered. Basic residues predominate over residues 27–37 (KSVRKAQRQKR). Residues 38 to 51 (SQGSSQFRSQGSQA) show a composition bias toward low complexity. Phosphoserine is present on residues serine 41, serine 42, and serine 49.

This sequence belongs to the phosphatase 2A regulatory subunit B56 family. In terms of assembly, PP2A consists of a common heterodimeric core enzyme, composed of a 36 kDa catalytic subunit (subunit C) and a 65 kDa constant regulatory subunit (PR65 or subunit A), that associates with a variety of regulatory subunits. Proteins that associate with the core dimer include three families of regulatory subunits B (the R2/B/PR55/B55, R3/B''/PR72/PR130/PR59 and R5/B'/B56 families), the 48 kDa variable regulatory subunit, viral proteins, and cell signaling molecules. Interacts with SGO1. In terms of tissue distribution, widely expressed with highest levels in thymus and ovary.

The protein localises to the cytoplasm. Its subcellular location is the nucleus. The protein resides in the chromosome. It is found in the centromere. In terms of biological role, the B regulatory subunit might modulate substrate selectivity and catalytic activity, and might also direct the localization of the catalytic enzyme to a particular subcellular compartment. In Mus musculus (Mouse), this protein is Serine/threonine-protein phosphatase 2A 56 kDa regulatory subunit alpha isoform (Ppp2r5a).